An 848-amino-acid polypeptide reads, in one-letter code: DNA mismatch repair protein MutS (848 aa).

605–612 (GPNMAGKS) provides a ligand contact to ATP.

It belongs to the DNA mismatch repair MutS family.

This protein is involved in the repair of mismatches in DNA. It is possible that it carries out the mismatch recognition step. This protein has a weak ATPase activity. The protein is DNA mismatch repair protein MutS of Leptospira interrogans serogroup Icterohaemorrhagiae serovar copenhageni (strain Fiocruz L1-130).